Here is a 297-residue protein sequence, read N- to C-terminus: tRNA pseudouridine synthase B (297 aa).

Catalysis depends on aspartate 44, which acts as the Nucleophile.

The protein belongs to the pseudouridine synthase TruB family. Type 1 subfamily.

It catalyses the reaction uridine(55) in tRNA = pseudouridine(55) in tRNA. In terms of biological role, responsible for synthesis of pseudouridine from uracil-55 in the psi GC loop of transfer RNAs. This chain is tRNA pseudouridine synthase B, found in Corynebacterium glutamicum (strain R).